A 78-amino-acid polypeptide reads, in one-letter code: Alpha-neurotoxin homolog 7 (78 aa).

Positions 1–21 (MKTLLLTLVVVTIVCLDFGYT) are cleaved as a signal peptide. Cystine bridges form between C24–C42, C37–C57, C59–C70, and C71–C76.

Belongs to the three-finger toxin family. Short-chain subfamily. Orphan group XII sub-subfamily. In terms of tissue distribution, expressed by the venom gland.

The protein resides in the secreted. The chain is Alpha-neurotoxin homolog 7 from Micrurus corallinus (Brazilian coral snake).